Consider the following 859-residue polypeptide: Protein SEY1 (859 aa).

The Cytoplasmic portion of the chain corresponds to 1 to 742 (MMMNSHFAGV…KRSAIGGITQ (742 aa)). A GB1/RHD3-type G domain is found at 49 to 291 (GFNYHLISVF…FQPQYHRRIP (243 aa)). 59–66 (GSQSTGKS) is a binding site for GTP. Residues 476–496 (FEHELKVYRKDLDDVSGRLRK) are a coiled coil. Positions 525-544 (LGTGRGGSGAPEHGERPPSE) are disordered. A helical transmembrane segment spans residues 743–763 (VPLYFYGLLVALGWNEIVAVL). The Lumenal portion of the chain corresponds to 764–766 (RNP). Residues 767 to 787 (VYFIFLILCAVGAYVTYTLNL) traverse the membrane as a helical segment. Over 788–859 (WGPMIRMGNA…DAEVEDLDDI (72 aa)) the chain is Cytoplasmic. Positions 816–859 (SSESGRQAMAMSGNQPRGESVRMNRLNGNGKKDEDAEVEDLDDI) are disordered. Residues 850-859 (DAEVEDLDDI) show a composition bias toward acidic residues.

This sequence belongs to the TRAFAC class dynamin-like GTPase superfamily. GB1/RHD3 GTPase family. RHD3 subfamily.

The protein localises to the endoplasmic reticulum membrane. Cooperates with the reticulon proteins and tubule-shaping DP1 family proteins to generate and maintain the structure of the tubular endoplasmic reticulum network. Has GTPase activity, which is required for its function in ER organization. In Phaeosphaeria nodorum (strain SN15 / ATCC MYA-4574 / FGSC 10173) (Glume blotch fungus), this protein is Protein SEY1.